A 137-amino-acid chain; its full sequence is Small ribosomal subunit protein uS12 (137 aa).

The interval 1–25 (MPTINQLVRQGRKSKTYKSDSPALS) is disordered. The residue at position 102 (Asp-102) is a 3-methylthioaspartic acid.

The protein belongs to the universal ribosomal protein uS12 family. As to quaternary structure, part of the 30S ribosomal subunit. Contacts proteins S8 and S17. May interact with IF1 in the 30S initiation complex.

In terms of biological role, with S4 and S5 plays an important role in translational accuracy. Functionally, interacts with and stabilizes bases of the 16S rRNA that are involved in tRNA selection in the A site and with the mRNA backbone. Located at the interface of the 30S and 50S subunits, it traverses the body of the 30S subunit contacting proteins on the other side and probably holding the rRNA structure together. The combined cluster of proteins S8, S12 and S17 appears to hold together the shoulder and platform of the 30S subunit. The polypeptide is Small ribosomal subunit protein uS12 (Finegoldia magna (strain ATCC 29328 / DSM 20472 / WAL 2508) (Peptostreptococcus magnus)).